A 267-amino-acid polypeptide reads, in one-letter code: MTKKIILRIAYQGTAYSGWQYQPNALSIQEVLETLLQKISRTRISVIASGRTDAGVHAQGQVAHFCCPDHPHFSDPGQIKKMLNALLPHDIVIRDVIATNEDFHSRFSAITKEYHYTLSLLPKPLPHHRLFCFSPRHKLCLESMREAAKYLVGTHDFASFANLGREYSSTVRTLYALDLLEQEHLVTVICKGNGFLYKMVRNIVGALLDIGKGKYPPEHLLEMLEKKDRKKGPPSAPPYGLSLHHVCYPSPYHWFCKHEHNSSNEEK.

Residue Asp53 is the Nucleophile of the active site. Position 114 (Tyr114) interacts with substrate.

Belongs to the tRNA pseudouridine synthase TruA family. Homodimer.

The enzyme catalyses uridine(38/39/40) in tRNA = pseudouridine(38/39/40) in tRNA. Functionally, formation of pseudouridine at positions 38, 39 and 40 in the anticodon stem and loop of transfer RNAs. This is tRNA pseudouridine synthase A from Chlamydia muridarum (strain MoPn / Nigg).